Reading from the N-terminus, the 504-residue chain is Cytochrome P450 2K4 (504 aa).

Heme is bound at residue C447.

The protein belongs to the cytochrome P450 family. It depends on heme as a cofactor.

It is found in the endoplasmic reticulum membrane. It localises to the microsome membrane. The catalysed reaction is an organic molecule + reduced [NADPH--hemoprotein reductase] + O2 = an alcohol + oxidized [NADPH--hemoprotein reductase] + H2O + H(+). The sequence is that of Cytochrome P450 2K4 (cyp2k4) from Oncorhynchus mykiss (Rainbow trout).